A 710-amino-acid polypeptide reads, in one-letter code: Polyribonucleotide nucleotidyltransferase (710 aa).

Residues Asp-488 and Asp-494 each contribute to the Mg(2+) site. The region spanning 555-615 (PVIKVISIDP…EKVDAAIEQI (61 aa)) is the KH domain. The S1 motif domain maps to 625-688 (GDVFSGKVTR…NLGRLQLEEF (64 aa)). A disordered region spans residues 688-710 (FSDSPDHKHGEKRSFKRHRKNDN). The segment covering 691–700 (SPDHKHGEKR) has biased composition (basic and acidic residues). A compositionally biased stretch (basic residues) spans 701-710 (SFKRHRKNDN).

This sequence belongs to the polyribonucleotide nucleotidyltransferase family. Mg(2+) serves as cofactor.

It localises to the cytoplasm. It catalyses the reaction RNA(n+1) + phosphate = RNA(n) + a ribonucleoside 5'-diphosphate. Involved in mRNA degradation. Catalyzes the phosphorolysis of single-stranded polyribonucleotides processively in the 3'- to 5'-direction. The chain is Polyribonucleotide nucleotidyltransferase from Pseudothermotoga lettingae (strain ATCC BAA-301 / DSM 14385 / NBRC 107922 / TMO) (Thermotoga lettingae).